A 380-amino-acid chain; its full sequence is F-box/kelch-repeat protein At3g18720 (380 aa).

Positions 47–94 (LWDKQIPTDLLQEILSRLGLKANIHASLVCKTWLKEAVSVRKFQSRPW) constitute an F-box domain. Kelch repeat units lie at residues 190 to 233 (CVIS…INRC) and 234 to 279 (IFSN…LVRQ).

In Arabidopsis thaliana (Mouse-ear cress), this protein is F-box/kelch-repeat protein At3g18720.